A 234-amino-acid chain; its full sequence is Methylamine utilization ferredoxin-type protein MauM (234 aa).

4 4Fe-4S ferredoxin-type domains span residues 61 to 91, 98 to 131, 140 to 176, and 184 to 215; these read ALAE…LASW, GTPF…PLLT, VAVL…LKPI, and QIPT…VLPR. [4Fe-4S] cluster-binding residues include C71, C74, C77, C81, C109, C112, C117, C121, C149, C157, C160, C164, C193, C196, C199, and C203.

The protein operates within one-carbon metabolism; methylamine degradation. Functionally, involved in electron transfer. This Methylobacillus flagellatus (strain ATCC 51484 / DSM 6875 / VKM B-1610 / KT) protein is Methylamine utilization ferredoxin-type protein MauM (mauM).